Here is a 526-residue protein sequence, read N- to C-terminus: Peptide chain release factor 3 (526 aa).

The tr-type G domain maps to 8–277 (NKRRTFAIIS…GLTQWAPAPQ (270 aa)). GTP is bound by residues 17–24 (SHPDAGKT), 85–89 (DTPGH), and 139–142 (NKLD).

This sequence belongs to the TRAFAC class translation factor GTPase superfamily. Classic translation factor GTPase family. PrfC subfamily.

The protein localises to the cytoplasm. Functionally, increases the formation of ribosomal termination complexes and stimulates activities of RF-1 and RF-2. It binds guanine nucleotides and has strong preference for UGA stop codons. It may interact directly with the ribosome. The stimulation of RF-1 and RF-2 is significantly reduced by GTP and GDP, but not by GMP. In Histophilus somni (strain 129Pt) (Haemophilus somnus), this protein is Peptide chain release factor 3.